A 567-amino-acid chain; its full sequence is Probable transport protein (567 aa).

Basic and acidic residues predominate over residues 1–30; the sequence is MSDRVEVNERRSDSVSEKEPARDDARKDVT. Residues 1-38 are disordered; sequence MSDRVEVNERRSDSVSEKEPARDDARKDVTDDQEDAPP. Topologically, residues 1–46 are cytoplasmic; sequence MSDRVEVNERRSDSVSEKEPARDDARKDVTDDQEDAPPFMTANNAR. A helical transmembrane segment spans residues 47 to 67; the sequence is VMLVQAIGGSLNGYSIGFVGV. Topologically, residues 68-160 are extracellular; that stretch reads YSTLFGYSTN…PSGYSSSESG (93 aa). The helical transmembrane segment at 161–181 threads the bilayer; it reads IFAGSMIAGCLIGSVFAGPLA. Topologically, residues 182–189 are cytoplasmic; the sequence is SKIGARLS. Residues 190-210 form a helical membrane-spanning segment; sequence FLLVGLVGVVASVMYHASCAA. The Extracellular portion of the chain corresponds to 211 to 212; the sequence is DE. A helical membrane pass occupies residues 213–233; the sequence is FWVLIVGRFVIGLFLGVICVA. The Cytoplasmic segment spans residues 234-249; it reads CPVYTDQNAHPKWKRT. A helical transmembrane segment spans residues 250–270; sequence IGVMFQVFTTLGIFVAALMGL. Topologically, residues 271 to 289 are extracellular; the sequence is ALGQSIRFDHDGDQKVMAR. A helical transmembrane segment spans residues 290–310; the sequence is MQGLCVFSTLFSLLTVVLGIV. The Cytoplasmic portion of the chain corresponds to 311 to 341; the sequence is TRESRAKFDGGEEGRAELNPSEYGYVEMIPR. A helical transmembrane segment spans residues 342-362; that stretch reads LLMGCVMAGTLQLTGINAVMN. Topologically, residues 363–366 are extracellular; sequence YAPT. The chain crosses the membrane as a helical span at residues 367-387; that stretch reads IMGSLGLAPLVGNFVVMLWNF. The Cytoplasmic portion of the chain corresponds to 388–404; the sequence is VTTLASIPLSYVFTMRH. The helical transmembrane segment at 405–425 threads the bilayer; it reads VFLFGSIFTSCMCLFMCGIPV. The Extracellular portion of the chain corresponds to 426-437; sequence YPGVSKKLEAKN. A helical transmembrane segment spans residues 438 to 458; it reads GVAITGILLFILGFEVCVGPC. Over 459-480 the chain is Cytoplasmic; it reads YYVLTQDMFPPSFRPRGASFTQ. A helical transmembrane segment spans residues 481-501; that stretch reads VAQFIFNLIINVCYPIATESI. At 502–514 the chain is on the extracellular side; the sequence is SGGPSGNQDKGQA. A helical transmembrane segment spans residues 515-535; it reads VAFIFFGGLGLICFVIQVFFL. Residues 536–567 are Cytoplasmic-facing; the sequence is HPWDEERDGKKVVAPAIGKKELSEESIGNRAE.

The protein belongs to the major facilitator superfamily. Sugar transporter (TC 2.A.1.1) family.

It is found in the membrane. Its function is as follows. Probable membrane transport protein. This chain is Probable transport protein (PRO-1), found in Leishmania enriettii.